A 214-amino-acid polypeptide reads, in one-letter code: Ribosomal RNA small subunit methyltransferase G (214 aa).

S-adenosyl-L-methionine contacts are provided by residues Gly-81, Met-86, 132–133 (VE), and Arg-147.

The protein belongs to the methyltransferase superfamily. RNA methyltransferase RsmG family.

The protein localises to the cytoplasm. The catalysed reaction is guanosine(527) in 16S rRNA + S-adenosyl-L-methionine = N(7)-methylguanosine(527) in 16S rRNA + S-adenosyl-L-homocysteine. Specifically methylates the N7 position of guanine in position 527 of 16S rRNA. This Pseudomonas paraeruginosa (strain DSM 24068 / PA7) (Pseudomonas aeruginosa (strain PA7)) protein is Ribosomal RNA small subunit methyltransferase G.